Reading from the N-terminus, the 495-residue chain is Ribose import ATP-binding protein RbsA (495 aa).

ABC transporter domains are found at residues 7–242 (LEMR…VGRP) and 250–491 (ERDI…TGVN). ATP is bound at residue 39–46 (GENGAGKS).

Belongs to the ABC transporter superfamily. Ribose importer (TC 3.A.1.2.1) family. In terms of assembly, the complex is composed of an ATP-binding protein (RbsA), two transmembrane proteins (RbsC) and a solute-binding protein (RbsB).

The protein localises to the cell inner membrane. It catalyses the reaction D-ribose(out) + ATP + H2O = D-ribose(in) + ADP + phosphate + H(+). Its function is as follows. Part of the ABC transporter complex RbsABC involved in ribose import. Responsible for energy coupling to the transport system. This chain is Ribose import ATP-binding protein RbsA, found in Shigella dysenteriae serotype 1 (strain Sd197).